A 293-amino-acid polypeptide reads, in one-letter code: Small ribosomal subunit protein uS3 (293 aa).

In terms of domain architecture, KH type-2 spans 39-110 (IRREIMKFLK…KISIKIKEVK (72 aa)).

This sequence belongs to the universal ribosomal protein uS3 family. Part of the 30S ribosomal subunit. Forms a tight complex with proteins S10 and S14.

Binds the lower part of the 30S subunit head. Binds mRNA in the 70S ribosome, positioning it for translation. In Borreliella burgdorferi (strain ATCC 35210 / DSM 4680 / CIP 102532 / B31) (Borrelia burgdorferi), this protein is Small ribosomal subunit protein uS3.